The chain runs to 276 residues: Pantothenate synthetase (276 aa).

Met-25–His-32 contributes to the ATP binding site. The active-site Proton donor is the His-32. (R)-pantoate is bound at residue Gln-56. A beta-alanine-binding site is contributed by Gln-56. Gly-143 to Asp-146 serves as a coordination point for ATP. Gln-149 contacts (R)-pantoate. Residues Val-172 and Leu-180–Arg-183 contribute to the ATP site.

The protein belongs to the pantothenate synthetase family. In terms of assembly, homodimer.

Its subcellular location is the cytoplasm. The catalysed reaction is (R)-pantoate + beta-alanine + ATP = (R)-pantothenate + AMP + diphosphate + H(+). Its pathway is cofactor biosynthesis; (R)-pantothenate biosynthesis; (R)-pantothenate from (R)-pantoate and beta-alanine: step 1/1. Functionally, catalyzes the condensation of pantoate with beta-alanine in an ATP-dependent reaction via a pantoyl-adenylate intermediate. The protein is Pantothenate synthetase of Thermus thermophilus (strain ATCC BAA-163 / DSM 7039 / HB27).